The following is a 101-amino-acid chain: Small ribosomal subunit protein uS14 (101 aa).

The tract at residues 1–20 is disordered; the sequence is MAKTSAVEKNKRRRKLVANH. Over residues 10-20 the composition is skewed to basic residues; sequence NKRRRKLVANH.

This sequence belongs to the universal ribosomal protein uS14 family. Part of the 30S ribosomal subunit. Contacts proteins S3 and S10.

Functionally, binds 16S rRNA, required for the assembly of 30S particles and may also be responsible for determining the conformation of the 16S rRNA at the A site. In Sinorhizobium medicae (strain WSM419) (Ensifer medicae), this protein is Small ribosomal subunit protein uS14.